Consider the following 396-residue polypeptide: MVKNFNYMFVANILSALCKFLILLVIVRLGTPEDVGRYNYALVITAPIFLFISLKIRSVIVTNDKYSPNEYISAILSLNIITLIFVAIFVYVLGNGDLTTILIVSLIKLFENIKEVPYGIYQKNESLKLLGISMGIYNILSLILFYIIYSFSHNLNMALLFLVISCIFSFAIIDRWYLSKYYNIKLHYNNNIAKFKEIFILTIPLAFSSALGSLNTGIPRIVLENLFGKYTLGIFSTIAYVLVIGGLFANSISQVFLPKLRKLYKDEKKIEFEKLTRKMVFIGIFIGMCSVILSLFLGEALLSLLFGKEYGENNIILIILSFGLLFILSGIFLGTTIIATGKYNVNYKISLILLFCILIFSFLLIPKYSLLGAALTITISQFVALISYYYFYKRIF.

12 consecutive transmembrane segments (helical) span residues 7–27 (YMFV…LVIV), 41–61 (ALVI…SVIV), 74–94 (AILS…YVLG), 101–121 (ILIV…YGIY), 129–149 (LLGI…YIIY), 153–173 (HNLN…FAII), 198–218 (IFIL…NTGI), 232–252 (LGIF…ANSI), 279–299 (MVFI…FLGE), 315–335 (IILI…FLGT), 351–371 (LILL…YSLL), and 372–392 (GAAL…YYFY).

Belongs to the polysaccharide synthase family.

The protein resides in the cell membrane. The protein operates within capsule biogenesis; capsule polysaccharide biosynthesis. Functionally, required for the biosynthesis of type 1 capsular polysaccharide. The sequence is that of Capsular polysaccharide biosynthesis protein CapF (capF) from Staphylococcus aureus.